The primary structure comprises 851 residues: Oligopeptide transport ATP-binding protein OppF (851 aa).

Residues 14-788 form the ABC transporter domain; sequence VKALSMLFKV…PVHPYTRSLI (775 aa). Position 48-55 (48-55) interacts with ATP; that stretch reads GESGSGKS.

This sequence belongs to the ABC transporter superfamily. The complex is composed of two ATP-binding proteins (OppD and OppF), two transmembrane proteins (OppB and OppC) and a solute-binding protein (OppA).

Its subcellular location is the cell membrane. The enzyme catalyses a [peptide](out) + ATP + H2O = a [peptide](in) + ADP + phosphate + H(+). In terms of biological role, part of the ABC transporter complex OppABCDF involved in the uptake of oligopeptides. Probably responsible for energy coupling to the transport system. This chain is Oligopeptide transport ATP-binding protein OppF (oppF), found in Mycoplasma pneumoniae (strain ATCC 29342 / M129 / Subtype 1) (Mycoplasmoides pneumoniae).